Consider the following 156-residue polypeptide: Small ribosomal subunit protein uS7 (156 aa).

In terms of assembly, part of the 30S ribosomal subunit. Contacts proteins S9 and S11. Binds to the C-terminus of IF3 and to the C-terminus of Era.

In terms of biological role, one of the primary rRNA binding proteins, it binds directly to 3'-end of the 16S rRNA where it nucleates assembly of the head domain of the 30S subunit. Is located at the subunit interface close to the decoding center. Binds mRNA and the E site tRNA blocking its exit path in the ribosome. This blockage implies that this section of the ribosome must be able to move to release the deacetylated tRNA. The protein is Small ribosomal subunit protein uS7 (rpsG) of Thermus thermophilus (strain ATCC 27634 / DSM 579 / HB8).